The following is a 498-amino-acid chain: Glycerol kinase (498 aa).

Thr12 is an ADP binding site. Thr12, Thr13, and Ser14 together coordinate ATP. Thr12 is a binding site for sn-glycerol 3-phosphate. ADP is bound at residue Arg16. The sn-glycerol 3-phosphate site is built by Arg82, Glu83, and Tyr134. Glycerol-binding residues include Arg82, Glu83, and Tyr134. His230 carries the post-translational modification Phosphohistidine; by HPr. Residue Asp244 participates in sn-glycerol 3-phosphate binding. Asp244 and Gln245 together coordinate glycerol. ADP-binding residues include Thr266 and Gly309. ATP is bound by residues Thr266, Gly309, Gln313, and Gly410. ADP contacts are provided by Gly410 and Asn414.

It belongs to the FGGY kinase family. Homotetramer and homodimer (in equilibrium). In terms of processing, the phosphoenolpyruvate-dependent sugar phosphotransferase system (PTS), including enzyme I, and histidine-containing protein (HPr) are required for the phosphorylation, which leads to the activation of the enzyme.

It carries out the reaction glycerol + ATP = sn-glycerol 3-phosphate + ADP + H(+). Its pathway is polyol metabolism; glycerol degradation via glycerol kinase pathway; sn-glycerol 3-phosphate from glycerol: step 1/1. Its activity is regulated as follows. Activated by phosphorylation and inhibited by fructose 1,6-bisphosphate (FBP). Its function is as follows. Key enzyme in the regulation of glycerol uptake and metabolism. Catalyzes the phosphorylation of glycerol to yield sn-glycerol 3-phosphate. The chain is Glycerol kinase from Staphylococcus aureus (strain MSSA476).